A 355-amino-acid chain; its full sequence is Dual-specificity RNA methyltransferase RlmN (355 aa).

The Proton acceptor role is filled by E86. A Radical SAM core domain is found at 105–338 (KEARYTVCVS…CTIRESKGLD (234 aa)). The cysteines at positions 112 and 343 are disulfide-linked. [4Fe-4S] cluster-binding residues include C119, C123, and C126. Residues 169-170 (GE), S201, 224-226 (SLH), and N300 each bind S-adenosyl-L-methionine. The S-methylcysteine intermediate role is filled by C343.

Belongs to the radical SAM superfamily. RlmN family. The cofactor is [4Fe-4S] cluster.

The protein localises to the cytoplasm. The enzyme catalyses adenosine(2503) in 23S rRNA + 2 reduced [2Fe-2S]-[ferredoxin] + 2 S-adenosyl-L-methionine = 2-methyladenosine(2503) in 23S rRNA + 5'-deoxyadenosine + L-methionine + 2 oxidized [2Fe-2S]-[ferredoxin] + S-adenosyl-L-homocysteine. It catalyses the reaction adenosine(37) in tRNA + 2 reduced [2Fe-2S]-[ferredoxin] + 2 S-adenosyl-L-methionine = 2-methyladenosine(37) in tRNA + 5'-deoxyadenosine + L-methionine + 2 oxidized [2Fe-2S]-[ferredoxin] + S-adenosyl-L-homocysteine. Functionally, specifically methylates position 2 of adenine 2503 in 23S rRNA and position 2 of adenine 37 in tRNAs. m2A2503 modification seems to play a crucial role in the proofreading step occurring at the peptidyl transferase center and thus would serve to optimize ribosomal fidelity. The chain is Dual-specificity RNA methyltransferase RlmN from Nitratiruptor sp. (strain SB155-2).